Here is a 282-residue protein sequence, read N- to C-terminus: Pantothenate synthetase (282 aa).

30–37 contributes to the ATP binding site; it reads MGYLHEGH. The active-site Proton donor is the H37. Q61 lines the (R)-pantoate pocket. Q61 provides a ligand contact to beta-alanine. 147 to 150 contributes to the ATP binding site; it reads GMKD. Q153 serves as a coordination point for (R)-pantoate. Residues V176 and 184–187 contribute to the ATP site; that span reads KSSR.

Belongs to the pantothenate synthetase family. In terms of assembly, homodimer.

The protein localises to the cytoplasm. The enzyme catalyses (R)-pantoate + beta-alanine + ATP = (R)-pantothenate + AMP + diphosphate + H(+). Its pathway is cofactor biosynthesis; (R)-pantothenate biosynthesis; (R)-pantothenate from (R)-pantoate and beta-alanine: step 1/1. Catalyzes the condensation of pantoate with beta-alanine in an ATP-dependent reaction via a pantoyl-adenylate intermediate. The polypeptide is Pantothenate synthetase (Bacillus cereus (strain ZK / E33L)).